We begin with the raw amino-acid sequence, 582 residues long: Membrane protein insertase YidC (582 aa).

Helical transmembrane passes span 4–24 (NTVLAVVLSMLVFGGWLYIQQ), 376–396 (IIPNWGVALLLLTLLMRIIFF), 446–466 (ASGCLPLLIQLPFLFAMFGLF), and 542–562 (FMPLFFFFLFYNAPSGLLLFW).

This sequence belongs to the OXA1/ALB3/YidC family. Type 1 subfamily. Interacts with the Sec translocase complex via SecD. Specifically interacts with transmembrane segments of nascent integral membrane proteins during membrane integration.

The protein resides in the cell inner membrane. In terms of biological role, required for the insertion and/or proper folding and/or complex formation of integral membrane proteins into the membrane. Involved in integration of membrane proteins that insert both dependently and independently of the Sec translocase complex, as well as at least some lipoproteins. Aids folding of multispanning membrane proteins. The chain is Membrane protein insertase YidC from Treponema denticola (strain ATCC 35405 / DSM 14222 / CIP 103919 / JCM 8153 / KCTC 15104).